A 416-amino-acid chain; its full sequence is Formyl-CoA:oxalate CoA-transferase (416 aa).

Residues 17 to 18, Arg38, 72 to 75, 96 to 98, His104, and 137 to 140 contribute to the CoA site; these read QS, LNTK, NFH, and KAYE. The active-site Nucleophile is the Asp169. 248-250 provides a ligand contact to substrate; sequence GGQ. 273-275 serves as a coordination point for CoA; the sequence is QEQ.

Belongs to the CoA-transferase III family. Frc subfamily. In terms of assembly, homodimer.

The enzyme catalyses formyl-CoA + oxalate = oxalyl-CoA + formate. It participates in metabolic intermediate degradation; oxalate degradation; CO(2) and formate from oxalate: step 1/2. In terms of biological role, involved in the catabolism of oxalate and in the adapatation to low pH via the induction of the oxalate-dependent acid tolerance response (ATR). Catalyzes the transfer of the CoA moiety from formyl-CoA to oxalate. The chain is Formyl-CoA:oxalate CoA-transferase from Escherichia coli (strain ATCC 8739 / DSM 1576 / NBRC 3972 / NCIMB 8545 / WDCM 00012 / Crooks).